Here is a 61-residue protein sequence, read N- to C-terminus: Probradykinin-2 (61 aa).

An N-terminal signal peptide occupies residues M1–C22. A propeptide spanning residues E23 to P50 is cleaved from the precursor. Positions E24 to T61 are disordered. Over residues E30 to S42 the composition is skewed to acidic residues. At P52 the chain carries 4-hydroxyproline.

The protein belongs to the frog skin active peptide (FSAP) family. Bradykinin-related peptide subfamily. As to expression, expressed by the skin glands.

The protein resides in the secreted. In terms of biological role, may produce in vitro relaxation of rat arterial smooth muscle and constriction of intestinal smooth muscle. May target bradykinin receptors (BDKRB). This Pithecopus azureus (Orange-legged monkey tree frog) protein is Probradykinin-2.